Consider the following 101-residue polypeptide: Nucleoid-associated protein Cla_0113 (101 aa).

The protein belongs to the YbaB/EbfC family. Homodimer.

It localises to the cytoplasm. The protein localises to the nucleoid. Its function is as follows. Binds to DNA and alters its conformation. May be involved in regulation of gene expression, nucleoid organization and DNA protection. The chain is Nucleoid-associated protein Cla_0113 from Campylobacter lari (strain RM2100 / D67 / ATCC BAA-1060).